Reading from the N-terminus, the 183-residue chain is Translation initiation factor IF-3 (183 aa).

The protein belongs to the IF-3 family. In terms of assembly, monomer.

The protein resides in the cytoplasm. In terms of biological role, IF-3 binds to the 30S ribosomal subunit and shifts the equilibrium between 70S ribosomes and their 50S and 30S subunits in favor of the free subunits, thus enhancing the availability of 30S subunits on which protein synthesis initiation begins. The chain is Translation initiation factor IF-3 from Yersinia pseudotuberculosis serotype O:1b (strain IP 31758).